The primary structure comprises 441 residues: Ribosomal protein uS12 methylthiotransferase RimO (441 aa).

The region spanning 7–117 (ASIAMISLGC…VVLEVHRAAP (111 aa)) is the MTTase N-terminal domain. Residues Cys-16, Cys-52, Cys-81, Cys-150, Cys-154, and Cys-157 each contribute to the [4Fe-4S] cluster site. Residues 136–373 (LTPRHYAYLK…MAHQQAISAA (238 aa)) enclose the Radical SAM core domain. The 66-residue stretch at 376 to 441 (QTRVGREIDV…DEYDLHGDAV (66 aa)) folds into the TRAM domain.

This sequence belongs to the methylthiotransferase family. RimO subfamily. The cofactor is [4Fe-4S] cluster.

The protein resides in the cytoplasm. The enzyme catalyses L-aspartate(89)-[ribosomal protein uS12]-hydrogen + (sulfur carrier)-SH + AH2 + 2 S-adenosyl-L-methionine = 3-methylsulfanyl-L-aspartate(89)-[ribosomal protein uS12]-hydrogen + (sulfur carrier)-H + 5'-deoxyadenosine + L-methionine + A + S-adenosyl-L-homocysteine + 2 H(+). Its function is as follows. Catalyzes the methylthiolation of an aspartic acid residue of ribosomal protein uS12. This chain is Ribosomal protein uS12 methylthiotransferase RimO, found in Bordetella petrii (strain ATCC BAA-461 / DSM 12804 / CCUG 43448).